Reading from the N-terminus, the 398-residue chain is Dual specificity protein phosphatase 4 (398 aa).

An N-acetylvaline modification is found at Val-2. The region spanning 45-163 (SGGKCLLLDC…FSSEYPEFCS (119 aa)) is the Rhodanese domain. One can recognise a Tyrosine-protein phosphatase domain in the interval 199 to 340 (GPVEILPFLY…LLQFESQVLT (142 aa)). The active-site Phosphocysteine intermediate is Cys-284. 2 positions are modified to phosphoserine; by MAPK: Ser-390 and Ser-395.

This sequence belongs to the protein-tyrosine phosphatase family. Non-receptor class dual specificity subfamily. In terms of assembly, hollow spherical complex composed of 24 subunits with pseudooctahedral symmetry, has a tetramer as the basic unit. Phosphorylation in the C-terminus by ERK1/2 inhibits proteasomal degradation and stabilizes the protein.

The protein localises to the nucleus. The enzyme catalyses O-phospho-L-tyrosyl-[protein] + H2O = L-tyrosyl-[protein] + phosphate. It carries out the reaction O-phospho-L-seryl-[protein] + H2O = L-seryl-[protein] + phosphate. The catalysed reaction is O-phospho-L-threonyl-[protein] + H2O = L-threonyl-[protein] + phosphate. In terms of biological role, regulates mitogenic signal transduction by dephosphorylating both Thr and Tyr residues on MAP kinases ERK1 and ERK2. The protein is Dual specificity protein phosphatase 4 (Dusp4) of Mus musculus (Mouse).